Here is a 102-residue protein sequence, read N- to C-terminus: uncharacterized protein (102 aa).

3 helical membrane-spanning segments follow: residues 14–34 (IKNWINFIKPIITIVGIVISA), 35–55 (VAFTISILWGMLFLILFLILI), and 76–96 (ILSIIGSIIIISIIVYSHCYI).

The protein localises to the cell membrane. This is an uncharacterized protein from Methanocaldococcus jannaschii (strain ATCC 43067 / DSM 2661 / JAL-1 / JCM 10045 / NBRC 100440) (Methanococcus jannaschii).